A 206-amino-acid polypeptide reads, in one-letter code: 2-phospho-L-lactate guanylyltransferase (206 aa).

This sequence belongs to the CofC family. As to quaternary structure, homodimer.

The catalysed reaction is (2S)-2-phospholactate + GTP + H(+) = (2S)-lactyl-2-diphospho-5'-guanosine + diphosphate. The protein operates within cofactor biosynthesis; coenzyme F420 biosynthesis. Functionally, guanylyltransferase that catalyzes the activation of (2S)-2-phospholactate (2-PL) as (2S)-lactyl-2-diphospho-5'-guanosine, via the condensation of 2-PL with GTP. It is involved in the biosynthesis of coenzyme F420, a hydride carrier cofactor. This is 2-phospho-L-lactate guanylyltransferase from Archaeoglobus fulgidus (strain ATCC 49558 / DSM 4304 / JCM 9628 / NBRC 100126 / VC-16).